A 311-amino-acid chain; its full sequence is Olfactory receptor 4K1 (311 aa).

Topologically, residues 1–25 (MAHTNESMVSEFVLLGLSNSWGLQL) are extracellular. Asn5 is a glycosylation site (N-linked (GlcNAc...) asparagine). A helical membrane pass occupies residues 26-49 (FFFAIFSIVYVTSVLGNVLIIVII). At 50–57 (SFDSHLNS) the chain is on the cytoplasmic side. The helical transmembrane segment at 58 to 79 (PMYFLLSNLSFIDICQSNFATP) threads the bilayer. Over 80–100 (KMLVDFFIERKTISFEGCMAQ) the chain is Extracellular. A disulfide bridge links Cys97 with Cys189. A helical membrane pass occupies residues 101–120 (IFVLHSFVGSEMMLLVAMAY). Residues 121–139 (DRFIAICKPLHYSTIMNRR) are Cytoplasmic-facing. A helical transmembrane segment spans residues 140–158 (LCVIFVSISWAVGVLHSVS). The Extracellular portion of the chain corresponds to 159-195 (HLAFTVDLPFCGPNEVDSFFCDLPLVIELACMDTYEM). The helical transmembrane segment at 196–219 (EIMTLTNSGLISLSCFLALIISYT) threads the bilayer. Over 220-235 (IILIGVRCRSSSGSSK) the chain is Cytoplasmic. Residues 236–258 (ALSTLTAHITVVILFFGPCIYFY) form a helical membrane-spanning segment. Residues 259–269 (IWPFSRLPVDK) lie on the Extracellular side of the membrane. Residues 270 to 289 (FLSVFYTVCTPLLNPIIYSL) form a helical membrane-spanning segment. Over 290–311 (RNEDVKAAMWKLRNRHVNSWKN) the chain is Cytoplasmic.

The protein belongs to the G-protein coupled receptor 1 family.

It localises to the cell membrane. In terms of biological role, odorant receptor. This chain is Olfactory receptor 4K1 (OR4K1), found in Homo sapiens (Human).